The sequence spans 300 residues: 33 kDa chaperonin (300 aa).

Disulfide bonds link Cys-247-Cys-249 and Cys-280-Cys-283.

The protein belongs to the HSP33 family. Under oxidizing conditions two disulfide bonds are formed involving the reactive cysteines. Under reducing conditions zinc is bound to the reactive cysteines and the protein is inactive.

The protein resides in the cytoplasm. Functionally, redox regulated molecular chaperone. Protects both thermally unfolding and oxidatively damaged proteins from irreversible aggregation. Plays an important role in the bacterial defense system toward oxidative stress. The polypeptide is 33 kDa chaperonin (Prochlorococcus marinus (strain MIT 9312)).